Here is a 490-residue protein sequence, read N- to C-terminus: Betaine aldehyde dehydrogenase (490 aa).

The K(+) site is built by I27 and D93. G150–W152 is an NAD(+) binding site. K162 functions as the Charge relay system in the catalytic mechanism. Position 176–179 (K176–E179) interacts with NAD(+). V180 lines the K(+) pocket. G230–T233 serves as a coordination point for NAD(+). L246 is a binding site for K(+). E252 acts as the Proton acceptor in catalysis. NAD(+)-binding residues include G254, C286, and E387. C286 serves as the catalytic Nucleophile. C286 carries the cysteine sulfenic acid (-SOH) modification. Residues K457 and G460 each contribute to the K(+) site. The active-site Charge relay system is E464.

The protein belongs to the aldehyde dehydrogenase family. As to quaternary structure, dimer of dimers. Requires K(+) as cofactor.

The catalysed reaction is betaine aldehyde + NAD(+) + H2O = glycine betaine + NADH + 2 H(+). The protein operates within amine and polyamine biosynthesis; betaine biosynthesis via choline pathway; betaine from betaine aldehyde: step 1/1. Its function is as follows. Involved in the biosynthesis of the osmoprotectant glycine betaine. Catalyzes the irreversible oxidation of betaine aldehyde to the corresponding acid. The chain is Betaine aldehyde dehydrogenase from Pseudomonas savastanoi pv. phaseolicola (strain 1448A / Race 6) (Pseudomonas syringae pv. phaseolicola (strain 1448A / Race 6)).